The sequence spans 336 residues: NAC domain-containing protein 100 (336 aa).

Residues 16–166 form the NAC domain; sequence LPPGFRFHPT…EWVICRVFQK (151 aa). A DNA-binding region spans residues 113-172; sequence VGMKKTLVFYRGRAPKGQKTNWVMHEYRLEGKFSAHNLPKTAKNEWVICRVFQKSAGGKK. The disordered stretch occupies residues 313–336; sequence RRFDSQEDPSSSTGPVDLEPFWNY.

It localises to the nucleus. Its function is as follows. Binds to the promoter regions of genes involved in chlorophyll catabolic processes, such as NYC1, SGR1, SGR2 and PAO. The polypeptide is NAC domain-containing protein 100 (Arabidopsis thaliana (Mouse-ear cress)).